The primary structure comprises 934 residues: MDNNPNINECIPYNCLSNPEVEVLGGERIETGYTPIDISLSLTQFLLSEFVPGAGFVLGLVDIIWGIFGPSQWDAFLVQIEQLINQRIEEFARNQAISRLEGLSNLYQIYAESFREWEADPTNPALREEMRIQFNDMNSALTTAIPLFAVQNYQVPLLSVYVQAANLHLSVLRDVSVFGQRWGFDAATINSRYNDLTRLIGNYTDYAVRWYNTGLERVWGPDSRDWVRYNQFRRELTLTVLDIVALFSNYDSRRYPIRTVSQLTREIYTNPVLENFDGSFRGMAQRIEQNIRQPHLMDILNRITIYTDVHRGFNYWSGHQITASPVGFSGPEFAFPLFGNAGNAAPPVLVSLTGLGIFRTLSSPLYRRIILGSGPNNQELFVLDGTEFSFASLTTNLPSTIYRQRGTVDSLDVIPPQDNSVPPRAGFSHRLSHVTMLSQAAGAVYTLRAPTFSWQHRSAEFNNIIPSSQITQIPLTKSTNLGSGTSVVKGPGFTGGDILRRTSPGQISTLRVNITAPLSQRYRVRIRYASTTNLQFHTSIDGRPINQGNFSATMSSGSNLQSGSFRTVGFTTPFNFSNGSSVFTLSAHVFNSGNEVYIDRIEFVPAEVTFEAEYDLERAQKAVNELFTSSNQIGLKTDVTDYHIDQVSNLVECLSDEFCLDEKQELSEKVKHAKRLSDERNLLQDPNFRGINRQLDRGWRGSTDITIQGGDDVFKENYVTLLGTFDECYPTYLYQKIDESKLKAYTRYQLRGYIEDSQDLEIYLIRYNAKHETVNVPGTGSLWPLSAQSPIGKCGEPNRCAPHLEWNPDLDCSCRDGEKCAHHSHHFSLDIDVGCTDLNEDLGVWVIFKIKTQDGHARLGNLEFLEEKPLVGEALARVKRAEKKWRDKREKLEWETNIVYKEAKESVDALFVNSQYDRLQADTNIAMIHAADKR.

This sequence belongs to the delta endotoxin family.

In terms of biological role, promotes colloidosmotic lysis by binding to the midgut epithelial cells of many lepidopteran larvae. The sequence is that of Pesticidal crystal protein Cry1Aa (cry1Aa) from Bacillus thuringiensis subsp. sotto.